Reading from the N-terminus, the 221-residue chain is MIKAILTDIEGTTSSINYVKDVMFGYSKKRLKDYLQTHWEEEHVKNIVKSLSQKLEKNIDLQTAVLVFKDFIEKDIKDTLLKELQGHIWEEGFKSGELKGHIYEDAYIKLKELKEKGYKIFAYSSGSIKAQKLFFGYSVYGDITNFFDGFFDTTMGSKKDKNSYIKIASATEIDPQMFLFLSDVKEEINASKEAGMNAILVSRDRPCEEKDCIRDFTEINL.

This sequence belongs to the HAD-like hydrolase superfamily. MasA/MtnC family. As to quaternary structure, monomer. Requires Mg(2+) as cofactor.

The enzyme catalyses 5-methylsulfanyl-2,3-dioxopentyl phosphate + H2O = 1,2-dihydroxy-5-(methylsulfanyl)pent-1-en-3-one + phosphate. It functions in the pathway amino-acid biosynthesis; L-methionine biosynthesis via salvage pathway; L-methionine from S-methyl-5-thio-alpha-D-ribose 1-phosphate: step 3/6. It participates in amino-acid biosynthesis; L-methionine biosynthesis via salvage pathway; L-methionine from S-methyl-5-thio-alpha-D-ribose 1-phosphate: step 4/6. In terms of biological role, bifunctional enzyme that catalyzes the enolization of 2,3-diketo-5-methylthiopentyl-1-phosphate (DK-MTP-1-P) into the intermediate 2-hydroxy-3-keto-5-methylthiopentenyl-1-phosphate (HK-MTPenyl-1-P), which is then dephosphorylated to form the acireductone 1,2-dihydroxy-3-keto-5-methylthiopentene (DHK-MTPene). In Hydrogenobaculum sp. (strain Y04AAS1), this protein is Enolase-phosphatase E1.